Here is a 2542-residue protein sequence, read N- to C-terminus: Zinc finger FYVE domain-containing protein 26 (2542 aa).

2 disordered regions span residues 591–658 and 740–811; these read HLPE…GPHT and VTSN…QVEA. 2 positions are modified to phosphoserine: Ser612 and Ser616. A compositionally biased stretch (basic residues) spans 752–772; the sequence is RRYRPTAKRHSSLRRGRRTRR. Positions 785-803 are enriched in low complexity; it reads SLEGTSSELSTSTSEGSLS. Position 798 is a phosphoserine (Ser798). Residues 866–891 adopt a coiled-coil conformation; sequence MFVERYQEVIQELARVEHKIENQNSD. The segment at 1273-1292 is disordered; the sequence is SPRPSENPSAERKSDSSPKD. Residues 1281–1290 show a composition bias toward basic and acidic residues; that stretch reads SAERKSDSSP. A coiled-coil region spans residues 1495-1522; the sequence is VSDMAVPEELKSELQRKLTELRVYQKIL. 4 positions are modified to phosphoserine: Ser1739, Ser1761, Ser1783, and Ser1785. The disordered stretch occupies residues 1746 to 1807; the sequence is PVHQASDPET…LEFVPPETPP (62 aa). Low complexity predominate over residues 1757-1779; sequence SRSSSAEFSAAAAAPAPAAPGSA. Residues 1815 to 1875 form an FYVE-type zinc finger; that stretch reads DETESMCMVC…VCDQCYSYYN (61 aa). Zn(2+)-binding residues include Cys1821, Cys1824, Cys1838, Cys1841, Cys1846, Cys1849, Cys1867, and Cys1870.

The protein belongs to the ZFYVE26 family. As to quaternary structure, interacts with AP5Z1, AP5B1, AP5S1 and SPG11. Interacts with TTC19 and KIF13A.

It is found in the cytoplasm. The protein resides in the cytoskeleton. Its subcellular location is the microtubule organizing center. The protein localises to the centrosome. It localises to the midbody. Its function is as follows. Phosphatidylinositol 3-phosphate-binding protein required for the abscission step in cytokinesis: recruited to the midbody during cytokinesis and acts as a regulator of abscission. May also be required for efficient homologous recombination DNA double-strand break repair. The protein is Zinc finger FYVE domain-containing protein 26 (Zfyve26) of Rattus norvegicus (Rat).